The sequence spans 1104 residues: SWI/SNF complex subunit SMARCC1 (1104 aa).

The interval 27–301 is marR-like, BRCT and chromo domains module; that stretch reads LAVYRRKDGG…PVSFRQRIST (275 aa). Positions 37 to 163 constitute a MarR-like domain; it reads PASKFWESPD…IEKTLVQNNC (127 aa). Residues 167-210 form the BRCT; N-terminus domain; that stretch reads PNIYLIPDIDLKLANKLKDIIKRHQGTFTDEKSKASHHIYPYPS. Lys178 is covalently cross-linked (Glycyl lysine isopeptide (Lys-Gly) (interchain with G-Cter in SUMO2)). The Chromo domain occupies 216–244; the sequence is EWLRPVMRRDKQVLVHWGFYPDSYDTWVH. The 25-residue stretch at 260-284 folds into the BRCT; C-terminus domain; sequence KPWKVHVKWILDTDVFNEWMNEEDY. Positions 295–445 are disordered; sequence FRQRISTKNE…PGEDNVTEQT (151 aa). Residues 301–317 are compositionally biased toward basic and acidic residues; sequence TKNEEPVRSPERRDRKA. Phosphoserine occurs at positions 309, 327, and 329. Residue Thr334 is modified to Phosphothreonine. Lys344 and Lys345 each carry N6-acetyllysine. Ser349 carries the post-translational modification Phosphoserine. Lys353 carries the N6-acetyllysine modification. Phosphoserine is present on Ser356. Lys358 is modified (N6-acetyllysine; alternate). Residue Lys358 forms a Glycyl lysine isopeptide (Lys-Gly) (interchain with G-Cter in SUMO2); alternate linkage. Phosphothreonine is present on Thr397. The SWIRM domain occupies 448-545; the sequence is IIIPSYASWF…YQVDPESRPM (98 aa). A Phosphoserine modification is found at Ser572. A Glycyl lysine isopeptide (Lys-Gly) (interchain with G-Cter in SUMO2) cross-link involves residue Lys591. Positions 617–668 constitute an SANT domain; the sequence is SAGREWTEQETLLLLEALEMYKDDWNKVSEHVGSRTQDECILHFLRLPIEDP. A Glycyl lysine isopeptide (Lys-Gly) (interchain with G-Cter in SUMO2) cross-link involves residue Lys738. The segment at 744–859 is disordered; it reads ARASGKVDPT…DAGKKKVEHE (116 aa). Ser775 is modified (phosphoserine). Residues 775–784 show a composition bias toward acidic residues; it reads SEEEKMETDP. Residues 788 to 859 are compositionally biased toward basic and acidic residues; that stretch reads QPEKAENKVE…DAGKKKVEHE (72 aa). Lys795 participates in a covalent cross-link: Glycyl lysine isopeptide (Lys-Gly) (interchain with G-Cter in SUMO2). Phosphoserine occurs at positions 821 and 824. Glycyl lysine isopeptide (Lys-Gly) (interchain with G-Cter in SUMO2) cross-links involve residues Lys828 and Lys855. A coiled-coil region spans residues 909-945; it reads KLRHFEELETIMDREKEALEQQRQQLLTERQNFHMEQ. Lys947 bears the N6-acetyllysine mark. Disordered stretches follow at residues 955 to 1021 and 1041 to 1104; these read QQME…PGPG and IHPT…SATP. The span at 956–973 shows a compositional bias: low complexity; that stretch reads QMEQQQQHGQTPQQAHQH. Pro residues-rich tracts occupy residues 994–1017 and 1048–1057; these read QQPP…PGQI and PTPPGMPPMP. At Arg1064 the chain carries Asymmetric dimethylarginine. Pro residues predominate over residues 1073–1104; the sequence is MYPPPPQQQQPPPPADGVPPPPAPGPPASATP.

This sequence belongs to the SMARCC family. In terms of assembly, component of the multiprotein chromatin-remodeling complexes SWI/SNF: SWI/SNF-A (BAF), SWI/SNF-B (PBAF) and related complexes. The canonical complex contains a catalytic subunit (either SMARCA4/BRG1/BAF190A or SMARCA2/BRM/BAF190B) and at least SMARCE1, ACTL6A/BAF53, SMARCC1/BAF155, SMARCC2/BAF170, and SMARCB1/SNF5/BAF47. Other subunits specific to each of the complexes may also be present permitting several possible combinations developmentally and tissue specific. Component of the BAF complex, which includes at least actin (ACTB), ARID1A/BAF250A, ARID1B/BAF250B, SMARCA2/BRM, SMARCA4/BRG1, ACTL6A/BAF53, ACTL6B/BAF53B, SMARCE1/BAF57, SMARCC1/BAF155, SMARCC2/BAF170, SMARCB1/SNF5/INI1, and one or more SMARCD1/BAF60A, SMARCD2/BAF60B, or SMARCD3/BAF60C. In muscle cells, the BAF complex also contains DPF3. Component of neural progenitors-specific chromatin remodeling complex (npBAF complex) composed of at least, ARID1A/BAF250A or ARID1B/BAF250B, SMARCD1/BAF60A, SMARCD3/BAF60C, SMARCA2/BRM/BAF190B, SMARCA4/BRG1/BAF190A, SMARCB1/BAF47, SMARCC1/BAF155, SMARCE1/BAF57, SMARCC2/BAF170, PHF10/BAF45A, ACTL6A/BAF53A and actin. Component of neuron-specific chromatin remodeling complex (nBAF complex) composed of at least, ARID1A/BAF250A or ARID1B/BAF250B, SMARCD1/BAF60A, SMARCD3/BAF60C, SMARCA2/BRM/BAF190B, SMARCA4/BRG1/BAF190A, SMARCB1/BAF47, SMARCC1/BAF155, SMARCE1/BAF57, SMARCC2/BAF170, DPF1/BAF45B, DPF3/BAF45C, ACTL6B/BAF53B and actin. Component of the SWI/SNF-B (PBAF) chromatin remodeling complex, at least composed of SMARCA4/BRG1, SMARCB1/BAF47/SNF5, ACTL6A/BAF53A or ACTL6B/BAF53B, SMARCE1/BAF57, SMARCD1/BAF60A, SMARCD2/BAF60B, perhaps SMARCD3/BAF60C, SMARCC1/BAF155, SMARCC2/BAF170, PBRM1/BAF180, ARID2/BAF200 and actin. Component of SWI/SNF (GBAF) subcomplex, which includes at least BICRA or BICRAL (mutually exclusive), BRD9, SS18, SMARCA2/BRM, SMARCA4/BRG1/BAF190A, ACTL6A/BAF53, SMARCC1/BAF155, and SMARCD1/BAF60A. May also interact with the SIN3A histone deacetylase transcription repressor complex in conjunction with SMARCA2 and SMARCA4. The minimal complex composed of SMARCC1 and SMARCA4 seems to be able to associate with cyclin such as CCNE1 or transcription factors such as KLF1 or GATA1. Interacts with NR3C1 and SMARD1. Interacts with TRIP12; leading to disrupt interaction between TRIP12 and SMARCE1 and prevent SMARCE1 ubiquitination. Interacts with CEBPB (when not methylated). Interacts with KDM6B. Interacts with MKKS; the interaction takes place predominantly in the cytoplasm and may modulate SMARCC1 location. Interacts with DPF2. Interacts with PRDM1/BLIMP1. Interacts with DPF3a (isoform 2 of DPF3/BAF45C) and with HDGFL2 in a DPF3a-dependent manner. As to expression, highly expressed in adult brain, testis and thymus.

Its subcellular location is the nucleus. The protein resides in the cytoplasm. Its function is as follows. Involved in transcriptional activation and repression of select genes by chromatin remodeling (alteration of DNA-nucleosome topology). Component of SWI/SNF chromatin remodeling complexes that carry out key enzymatic activities, changing chromatin structure by altering DNA-histone contacts within a nucleosome in an ATP-dependent manner. May stimulate the ATPase activity of the catalytic subunit of the complex. Belongs to the neural progenitors-specific chromatin remodeling complex (npBAF complex) and the neuron-specific chromatin remodeling complex (nBAF complex). During neural development a switch from a stem/progenitor to a postmitotic chromatin remodeling mechanism occurs as neurons exit the cell cycle and become committed to their adult state. The transition from proliferating neural stem/progenitor cells to postmitotic neurons requires a switch in subunit composition of the npBAF and nBAF complexes. As neural progenitors exit mitosis and differentiate into neurons, npBAF complexes which contain ACTL6A/BAF53A and PHF10/BAF45A, are exchanged for homologous alternative ACTL6B/BAF53B and DPF1/BAF45B or DPF3/BAF45C subunits in neuron-specific complexes (nBAF). The npBAF complex is essential for the self-renewal/proliferative capacity of the multipotent neural stem cells. The nBAF complex along with CREST plays a role regulating the activity of genes essential for dendrite growth. The sequence is that of SWI/SNF complex subunit SMARCC1 (Smarcc1) from Mus musculus (Mouse).